Here is a 526-residue protein sequence, read N- to C-terminus: Biotin carboxylase 2, chloroplastic (526 aa).

The N-terminal 71 residues, 1–71, are a transit peptide targeting the chloroplast; the sequence is MEATLPVCKS…GVTCRAEKIL (71 aa). ATP is bound by residues Lys181, 213-274, Lys223, 229-230, 265-268, and His273; these read ASEI…PRHI, GG, and EKYV. The ATP-grasp domain occupies 185–382; the sequence is RETMKKANVP…LIEEQIRVAM (198 aa). Lys302 contributes to the hydrogencarbonate binding site. The ATP site is built by Glu340 and Glu353. Mg(2+) is bound by residues Glu340, Glu353, and Asn355. Mn(2+)-binding residues include Glu340, Glu353, and Asn355. Arg357, Val360, and Arg403 together coordinate hydrogencarbonate. The active site involves Arg357. Arg403 serves as a coordination point for biotin.

In terms of assembly, acetyl-CoA carboxylase is a heterohexamer composed of biotin carboxyl carrier protein, biotin carboxylase and two subunits each of ACCase subunit alpha and ACCase plastid-coded subunit beta (accD). Mg(2+) serves as cofactor. Requires Mn(2+) as cofactor.

It is found in the plastid. It localises to the chloroplast. It catalyses the reaction N(6)-biotinyl-L-lysyl-[protein] + hydrogencarbonate + ATP = N(6)-carboxybiotinyl-L-lysyl-[protein] + ADP + phosphate + H(+). It participates in lipid metabolism; malonyl-CoA biosynthesis; malonyl-CoA from acetyl-CoA: step 1/1. Its function is as follows. This protein is a component of the acetyl coenzyme A carboxylase complex; first, biotin carboxylase catalyzes the carboxylation of the carrier protein and then the transcarboxylase transfers the carboxyl group to form malonyl-CoA. The polypeptide is Biotin carboxylase 2, chloroplastic (Populus trichocarpa (Western balsam poplar)).